The following is a 158-amino-acid chain: MAVAELEKKVFELTTVEKLVGWARSGSMWPMTFGLACCAVEMMHVGAARYDLDRFGIIFRPSPRQSDVMIVAGTLCNKMAPALRKVYDQMPEPRWVISMGSCANGGGYYHYSYSVVRGCDRIVPVDVYVPGCPPTAEALLYGIIQLQNKIRRKPVLEA.

[4Fe-4S] cluster-binding residues include cysteine 37, cysteine 38, cysteine 102, and cysteine 132.

Belongs to the complex I 20 kDa subunit family. As to quaternary structure, NDH-1 is composed of 14 different subunits. Subunits NuoB, C, D, E, F, and G constitute the peripheral sector of the complex. Requires [4Fe-4S] cluster as cofactor.

Its subcellular location is the cell inner membrane. It catalyses the reaction a quinone + NADH + 5 H(+)(in) = a quinol + NAD(+) + 4 H(+)(out). In terms of biological role, NDH-1 shuttles electrons from NADH, via FMN and iron-sulfur (Fe-S) centers, to quinones in the respiratory chain. Couples the redox reaction to proton translocation (for every two electrons transferred, four hydrogen ions are translocated across the cytoplasmic membrane), and thus conserves the redox energy in a proton gradient. This is NADH-quinone oxidoreductase subunit B from Legionella pneumophila (strain Corby).